An 87-amino-acid polypeptide reads, in one-letter code: Large ribosomal subunit protein bL27 (87 aa).

The tract at residues Met1 to Gly22 is disordered.

The protein belongs to the bacterial ribosomal protein bL27 family.

The chain is Large ribosomal subunit protein bL27 from Akkermansia muciniphila (strain ATCC BAA-835 / DSM 22959 / JCM 33894 / BCRC 81048 / CCUG 64013 / CIP 107961 / Muc).